Reading from the N-terminus, the 259-residue chain is Leucine-rich repeat-containing protein 61 (259 aa).

3 LRR repeats span residues 54–75 (NLEW…ASLR), 76–97 (QLAV…AACE), and 98–119 (NLQS…QCLA). One can recognise an LRRCT domain in the interval 138–178 (NPLCANASYWAVVRELLPGLKVIDGERVSGRGSELYQLCRD).

The protein is Leucine-rich repeat-containing protein 61 (Lrrc61) of Mus musculus (Mouse).